We begin with the raw amino-acid sequence, 265 residues long: tRNA (guanine-N(7)-)-methyltransferase (265 aa).

The segment covering 1-16 (MNHDDPNASGVPHDDA) has biased composition (basic and acidic residues). The tract at residues 1 to 40 (MNHDDPNASGVPHDDANDAAPASASDAARATGHADDESSP) is disordered. Residues 18-31 (DAAPASASDAARAT) show a composition bias toward low complexity. Glu95, Glu120, Asp147, and Asp170 together coordinate S-adenosyl-L-methionine. Asp170 is a catalytic residue. Residues Lys174, Asp206, and 241–244 (TKFE) contribute to the substrate site.

It belongs to the class I-like SAM-binding methyltransferase superfamily. TrmB family.

The enzyme catalyses guanosine(46) in tRNA + S-adenosyl-L-methionine = N(7)-methylguanosine(46) in tRNA + S-adenosyl-L-homocysteine. It participates in tRNA modification; N(7)-methylguanine-tRNA biosynthesis. In terms of biological role, catalyzes the formation of N(7)-methylguanine at position 46 (m7G46) in tRNA. In Burkholderia thailandensis (strain ATCC 700388 / DSM 13276 / CCUG 48851 / CIP 106301 / E264), this protein is tRNA (guanine-N(7)-)-methyltransferase.